A 427-amino-acid polypeptide reads, in one-letter code: Enolase (427 aa).

Gln163 lines the (2R)-2-phosphoglycerate pocket. Glu205 acts as the Proton donor in catalysis. Mg(2+) contacts are provided by Asp242, Glu285, and Asp312. Positions 337, 366, 367, and 388 each coordinate (2R)-2-phosphoglycerate. Lys337 acts as the Proton acceptor in catalysis.

Belongs to the enolase family. It depends on Mg(2+) as a cofactor.

The protein localises to the cytoplasm. It localises to the secreted. The protein resides in the cell surface. It carries out the reaction (2R)-2-phosphoglycerate = phosphoenolpyruvate + H2O. It functions in the pathway carbohydrate degradation; glycolysis; pyruvate from D-glyceraldehyde 3-phosphate: step 4/5. Functionally, catalyzes the reversible conversion of 2-phosphoglycerate (2-PG) into phosphoenolpyruvate (PEP). It is essential for the degradation of carbohydrates via glycolysis. In Burkholderia multivorans (strain ATCC 17616 / 249), this protein is Enolase.